A 92-amino-acid polypeptide reads, in one-letter code: Putative membrane protein insertion efficiency factor (92 aa).

Belongs to the UPF0161 family.

The protein resides in the cell inner membrane. In terms of biological role, could be involved in insertion of integral membrane proteins into the membrane. This is Putative membrane protein insertion efficiency factor from Synechococcus sp. (strain CC9605).